The sequence spans 256 residues: 5'-nucleotidase SurE (256 aa).

Residues Asp-8, Asp-9, Ser-40, and Asn-94 each contribute to the a divalent metal cation site.

This sequence belongs to the SurE nucleotidase family. A divalent metal cation is required as a cofactor.

The protein resides in the cytoplasm. It catalyses the reaction a ribonucleoside 5'-phosphate + H2O = a ribonucleoside + phosphate. In terms of biological role, nucleotidase that shows phosphatase activity on nucleoside 5'-monophosphates. This Wolbachia pipientis subsp. Culex pipiens (strain wPip) protein is 5'-nucleotidase SurE.